Consider the following 881-residue polypeptide: MGSKPWLHPAPQYKTLETFWDDEDDAPGPRCAHTLTAVAATKTHGPRLILFGGATAIEGGSSSVPGIRLAGVTNTVHSYDILTRKWTRLKPAGEPPSPRAAHAAAAVGTMVVFQGGIGPAGHSTDDLYVLDMTNDKFKWHRVVVQGDGPGPRYGHVMDLVSQRYLVTVTGNDGKRALSDAWALDTAQKPYVWQRLNPDGDRPSARMYASGSARSDGMFLLCGGRDTLGAPLGDAYGLLMHRNGQWEWTLAPGVAPSPRYQHAAVFVGARLHVSGGVLRGGRVIDAEASVAVLDTAAGVWLDRNGQVTSARGSKGQIDQDPSFELMRRCRHGAASVGIRIYVHGGLRGDVLLDDFLVAENSTFQSDISSPLLASDRTQQSSTPRFSYAARPPSGSEPSFSMSEGLSLDENSLEKLTEASAAEAEVASSVWRAAQLGAGTLDEEPSTSDASSPIVESTTDGTANEGDVRLHPRAVVVAKETVGSLGGMVRQLSLDQFQNESRRMVPMNNSDVPQPTKKFTRQKSPQGLHKKVIAALLRPRNWKPPGNRKFFLDSYEVGELCYAAEQIFMHEQTVLQLKAPIKVFGDLHGQFGDLMRLFDEYGFPSTAGDITYIDYLFLGDYVDRGQHSLETITLLLALKIEYPENVHLIRGNHEAADINALFGFRLECIERMGENDGIWAWTRFNQLFNYLPLAALIENKIICMHGGIGRSISTVEQIEKIERPITMDAGSLVLMDLLWSDPTENDSIEGLRPNARGPGLVTFGPDRVTEFCKRNKLQLIIRAHECVMDGFERFAQGQLITLFSATNYCGTANNAGAILVVGRGLVIVPKLIHPLPPPILSPENSPEHSGDDAWMQELNIQRPPTPTRGRPQPDFDRSSLAYI.

Kelch repeat units lie at residues 60-109, 269-320, and 338-385; these read GSSS…AVGT, RLHV…DQDP, and RIYV…PRFS. Disordered regions lie at residues 368–407 and 436–464; these read SPLLASDRTQQSSTPRFSYAARPPSGSEPSFSMSEGLSLD and AGTLDEEPSTSDASSPIVESTTDGTANEG. Polar residues-rich tracts occupy residues 374–383 and 445–460; these read DRTQQSSTPR and TSDASSPIVESTTDGT. The residue at position 491 (Ser-491) is a Phosphoserine. Positions 503-522 are disordered; it reads VPMNNSDVPQPTKKFTRQKS. Positions 584, 586, 618, and 650 each coordinate Mn(2+). His-651 (proton donor) is an active-site residue. Mn(2+) contacts are provided by His-703 and His-782. The interval 837 to 881 is disordered; it reads ILSPENSPEHSGDDAWMQELNIQRPPTPTRGRPQPDFDRSSLAYI. The residue at position 839 (Ser-839) is a Phosphoserine.

This sequence belongs to the PPP phosphatase family. BSU subfamily. As to quaternary structure, interacts with CDG1 and CDL1. Mn(2+) is required as a cofactor. Expressed in mature cauline leaves and at the tip of influorescence, including flowers. Expressed at lower level in young tissues relative to older ones.

Its subcellular location is the nucleus. The catalysed reaction is O-phospho-L-seryl-[protein] + H2O = L-seryl-[protein] + phosphate. It carries out the reaction O-phospho-L-threonyl-[protein] + H2O = L-threonyl-[protein] + phosphate. Functionally, phosphatase involved in elongation process, probably by acting as a regulator of brassinolide signaling. This is Serine/threonine-protein phosphatase BSL1 (BSL1) from Arabidopsis thaliana (Mouse-ear cress).